Here is a 200-residue protein sequence, read N- to C-terminus: WASH complex subunit 3 (200 aa).

Residues 56–76 (SLRIQQIETTLSILEAKLASI) adopt a coiled-coil conformation. Disordered stretches follow at residues 87–130 (VRAP…AENI) and 165–200 (DPNLLDTPDAAVPDASKKRLEEQDDDSSGSESSFSD).

The protein belongs to the CCDC53 family. In terms of assembly, component of the WASH complex.

The chain is WASH complex subunit 3 from Danio rerio (Zebrafish).